Reading from the N-terminus, the 117-residue chain is Ubiquitin-like protein 3 (117 aa).

In terms of domain architecture, Ubiquitin-like spans 10–88 (INLRLILVSG…PFGKTTVMHL (79 aa)). A lipid anchor (S-palmitoyl cysteine) is attached at cysteine 113. Cysteine 114 carries the cysteine methyl ester modification. The S-geranylgeranyl cysteine moiety is linked to residue cysteine 114. Residues 115–117 (VIL) constitute a propeptide, removed in mature form.

The protein resides in the cell membrane. The protein is Ubiquitin-like protein 3 (UBL3) of Bos taurus (Bovine).